The chain runs to 358 residues: MAGGNEVNLNECKRIVPLNTWVLISNFKLAYKVLRRPDGSFNRDLAEFLDRKVPANSFPLDGVFSFDHVDSTTNLLTRIYQPASLLHQTRHGTLELTKPLSTTEIVPVLIFFHGGSFTHSSANSAIYDTFCRRLVTICGVVVVSVDYRRSPEHRYPCAYDDGWNALNWVKSRVWLQSGKDSNVYVYLAGDSSGGNIAHNVAVRATNEGVKVLGNILLHPMFGGQERTQSEKTLDGKYFVTIQDRDWYWRAYLPEGEDRDHPACNPFGPRGQSLKGVNFPKSLVVVAGLDLVQDWQLAYVDGLKKTGLEVNLLYLKQATIGFYFLPNNDHFHCLMEELNKFVHSIEDSQSKSSPVLLTP.

Alanine 2 carries the N-acetylalanine modification. The Involved in the stabilization of the negatively charged intermediate by the formation of the oxyanion hole motif lies at 113–115; it reads HGG. Gibberellin A4 contacts are provided by residues 115-116, tyrosine 127, and serine 191; that span reads GS. Gibberellin A3 contacts are provided by serine 116, tyrosine 127, serine 191, and phenylalanine 238. Residue serine 191 is part of the active site. The active site involves aspartate 289. Glycine 320 is a binding site for gibberellin A4. Glycine 320 provides a ligand contact to gibberellin A3.

This sequence belongs to the 'GDXG' lipolytic enzyme family. In terms of assembly, interacts with the DELLA proteins GAI, RGA, RGL1, RGL2 and RGL3 in a GA-dependent manner. Widely expressed.

The protein localises to the nucleus. Its function is as follows. Functions as a soluble gibberellin (GA) receptor. GA is an essential hormone that regulates growth and development in plants. Binds with high affinity the biologically active gibberellin GA4, but has no affinity for the biologically inactive GAs. In response to GA, interacts with specific DELLA proteins, known as repressors of GA-induced growth, and targets them for degradation via proteasome. Seems to be required for GA signaling that controls root growth, seed germination and flower development. May function as a dominant GA receptor at low GA concentrations in germination. Partially redundant with GID1A and GID1C. The sequence is that of Gibberellin receptor GID1B (GID1B) from Arabidopsis thaliana (Mouse-ear cress).